The chain runs to 267 residues: 3-methyl-2-oxobutanoate hydroxymethyltransferase (267 aa).

Mg(2+) is bound by residues Asp-45 and Asp-84. 3-methyl-2-oxobutanoate-binding positions include 45–46 (DS), Asp-84, and Lys-113. Glu-115 serves as a coordination point for Mg(2+). Glu-182 acts as the Proton acceptor in catalysis.

It belongs to the PanB family. In terms of assembly, homodecamer; pentamer of dimers. Mg(2+) serves as cofactor.

Its subcellular location is the cytoplasm. The enzyme catalyses 3-methyl-2-oxobutanoate + (6R)-5,10-methylene-5,6,7,8-tetrahydrofolate + H2O = 2-dehydropantoate + (6S)-5,6,7,8-tetrahydrofolate. Its pathway is cofactor biosynthesis; coenzyme A biosynthesis. Its function is as follows. Catalyzes the reversible reaction in which hydroxymethyl group from 5,10-methylenetetrahydrofolate is transferred onto alpha-ketoisovalerate to form ketopantoate. The polypeptide is 3-methyl-2-oxobutanoate hydroxymethyltransferase (Saccharolobus islandicus (strain Y.N.15.51 / Yellowstone #2) (Sulfolobus islandicus)).